We begin with the raw amino-acid sequence, 518 residues long: DNA-binding protein D-ETS-4 (518 aa).

Disordered regions lie at residues 74–113 (SQPI…QSSP) and 152–172 (LPPS…SCGE). The span at 84 to 94 (TAPYTNPSSHQ) shows a compositional bias: polar residues. Positions 102 to 113 (PHSAYPSPQSSP) are enriched in low complexity. Residues 158–171 (ESNCETPSPRSSCG) are compositionally biased toward polar residues. The 87-residue stretch at 258 to 344 (HAKREADAIC…AQLEIWKMAY (87 aa)) folds into the PNT domain. Residues 393–426 (APLNGSTTSPPATNASNGGTATVKRPNGGRTGGG) form a disordered region. Polar residues predominate over residues 396–412 (NGSTTSPPATNASNGGT). A DNA-binding region (ETS) is located at residues 430-513 (IHLWQFLKEL…RSQRLVYQFC (84 aa)).

It belongs to the ETS family. As to expression, transient high expression in pole cells during embryonic stages 8-11.

The protein resides in the nucleus. Its function is as follows. May have a role in germline development. This is DNA-binding protein D-ETS-4 (Ets98B) from Drosophila melanogaster (Fruit fly).